A 178-amino-acid polypeptide reads, in one-letter code: N-alpha-acetyltransferase 20 (178 aa).

An N-acetyltransferase domain is found at 2-157 (TTLRAFTCDD…DAYDMRKALS (156 aa)).

Belongs to the acetyltransferase family. ARD1 subfamily. Component of the N-terminal acetyltransferase B (NatB) complex which is composed of NAA20 and NAA25.

The protein localises to the cytoplasm. It is found in the nucleus. It carries out the reaction N-terminal L-methionyl-L-asparaginyl-[protein] + acetyl-CoA = N-terminal N(alpha)-acetyl-L-methionyl-L-asparaginyl-[protein] + CoA + H(+). It catalyses the reaction N-terminal L-methionyl-L-glutaminyl-[protein] + acetyl-CoA = N-terminal N(alpha)-acetyl-L-methionyl-L-glutaminyl-[protein] + CoA + H(+). The catalysed reaction is N-terminal L-methionyl-L-aspartyl-[protein] + acetyl-CoA = N-terminal N(alpha)-acetyl-L-methionyl-L-aspartyl-[protein] + CoA + H(+). The enzyme catalyses N-terminal L-methionyl-L-glutamyl-[protein] + acetyl-CoA = N-terminal N(alpha)-acetyl-L-methionyl-L-glutamyl-[protein] + CoA + H(+). Functionally, catalytic subunit of the NatB complex which catalyzes acetylation of the N-terminal methionine residues of peptides beginning with Met-Asp, Met-Glu, Met-Asn and Met-Gln. Proteins with cell cycle functions are overrepresented in the pool of NatB substrates. Required for maintaining the structure and function of actomyosin fibers and for proper cellular migration. The chain is N-alpha-acetyltransferase 20 (NAA20) from Homo sapiens (Human).